The sequence spans 606 residues: Ubiquitin-like modifier-activating enzyme ATG7 (606 aa).

The short motif at 316–321 (GSGTLG) is the GXGXXG motif element. The active-site Glycyl thioester intermediate is Cys-488. The interval 567-606 (ALDDYKCVEKLSGLSKVQEEAELALEEDFDFSEDDEFVTG) is homodimerization.

This sequence belongs to the ATG7 family. Homodimer. Interacts with ATG8 through a thioester bond between Cys-488 and the C-terminal Gly of ATG8 and with ATG12 through a thioester bond between Cys-488 and the C-terminal Gly of ATG12. Also interacts with ATG3.

It localises to the cytoplasm. Its subcellular location is the preautophagosomal structure. Functionally, E1-like activating enzyme involved in the 2 ubiquitin-like systems required for cytoplasm to vacuole transport (Cvt) and autophagy. Activates ATG12 for its conjugation with ATG5 and ATG8 for its conjugation with phosphatidylethanolamine. Both systems are needed for the ATG8 association to Cvt vesicles and autophagosomes membranes. Autophagy is essential for maintenance of amino acid levels and protein synthesis under nitrogen starvation. Required for selective autophagic degradation of the nucleus (nucleophagy) as well as for mitophagy which contributes to regulate mitochondrial quantity and quality by eliminating the mitochondria to a basal level to fulfill cellular energy requirements and preventing excess ROS production. The polypeptide is Ubiquitin-like modifier-activating enzyme ATG7 (Kluyveromyces marxianus (strain DMKU3-1042 / BCC 29191 / NBRC 104275) (Yeast)).